Here is a 469-residue protein sequence, read N- to C-terminus: Glutamate--tRNA ligase (469 aa).

A 'HIGH' region motif is present at residues Pro-9–Gly-19. Cys-98, Cys-100, Cys-125, and Asp-127 together coordinate Zn(2+). Residues Lys-237 to Arg-241 carry the 'KMSKS' region motif. Lys-240 contacts ATP.

It belongs to the class-I aminoacyl-tRNA synthetase family. Glutamate--tRNA ligase type 1 subfamily. In terms of assembly, monomer. Zn(2+) is required as a cofactor.

It localises to the cytoplasm. The catalysed reaction is tRNA(Glu) + L-glutamate + ATP = L-glutamyl-tRNA(Glu) + AMP + diphosphate. In terms of biological role, catalyzes the attachment of glutamate to tRNA(Glu) in a two-step reaction: glutamate is first activated by ATP to form Glu-AMP and then transferred to the acceptor end of tRNA(Glu). The polypeptide is Glutamate--tRNA ligase (Serratia proteamaculans (strain 568)).